Consider the following 229-residue polypeptide: Large ribosomal subunit protein uL1 (229 aa).

Belongs to the universal ribosomal protein uL1 family. As to quaternary structure, part of the 50S ribosomal subunit.

In terms of biological role, binds directly to 23S rRNA. The L1 stalk is quite mobile in the ribosome, and is involved in E site tRNA release. Its function is as follows. Protein L1 is also a translational repressor protein, it controls the translation of the L11 operon by binding to its mRNA. The protein is Large ribosomal subunit protein uL1 of Pelagibacter ubique (strain HTCC1062).